The sequence spans 40 residues: Serine proteinase-like BMK-CBP (40 aa).

Positions 1 to 40 constitute a Peptidase S1 domain; that stretch reads IFGGTFAKNGEYPWMVVIDLPEFACGGVLISKKFVLTAAH. The active-site Charge relay system is the H40.

This sequence belongs to the peptidase S1 family. Expressed by the venom gland.

It is found in the secreted. In terms of biological role, binds in a dose-dependent manner to the breast cancer cell line MCF-7. The chain is Serine proteinase-like BMK-CBP from Olivierus martensii (Manchurian scorpion).